The primary structure comprises 159 residues: uncharacterized protein (159 aa).

Disordered stretches follow at residues 1–23 (MEQD…KGQA) and 91–110 (AGGG…GPAA).

This is an uncharacterized protein from Homo sapiens (Human).